A 349-amino-acid polypeptide reads, in one-letter code: Phosphate acyltransferase (349 aa).

Belongs to the PlsX family. In terms of assembly, homodimer. Probably interacts with PlsY.

The protein localises to the cytoplasm. The catalysed reaction is a fatty acyl-[ACP] + phosphate = an acyl phosphate + holo-[ACP]. It participates in lipid metabolism; phospholipid metabolism. Its function is as follows. Catalyzes the reversible formation of acyl-phosphate (acyl-PO(4)) from acyl-[acyl-carrier-protein] (acyl-ACP). This enzyme utilizes acyl-ACP as fatty acyl donor, but not acyl-CoA. This is Phosphate acyltransferase from Rhodospirillum rubrum (strain ATCC 11170 / ATH 1.1.1 / DSM 467 / LMG 4362 / NCIMB 8255 / S1).